A 396-amino-acid chain; its full sequence is Elongation factor Tu 1 (396 aa).

Positions 10 to 206 (KPHVNVGTIG…TLDTYIPEPE (197 aa)) constitute a tr-type G domain. A G1 region spans residues 19–26 (GHVDHGKT). Residue 19–26 (GHVDHGKT) coordinates GTP. Threonine 26 serves as a coordination point for Mg(2+). Residues 60-64 (GITIN) are G2. A G3 region spans residues 81-84 (DCPG). GTP-binding positions include 81–85 (DCPGH) and 136–139 (NKCD). Residues 136-139 (NKCD) are G4. Residues 174 to 176 (SAL) are G5.

Belongs to the TRAFAC class translation factor GTPase superfamily. Classic translation factor GTPase family. EF-Tu/EF-1A subfamily. As to quaternary structure, monomer.

The protein resides in the cytoplasm. The enzyme catalyses GTP + H2O = GDP + phosphate + H(+). GTP hydrolase that promotes the GTP-dependent binding of aminoacyl-tRNA to the A-site of ribosomes during protein biosynthesis. In Psychrobacter sp. (strain PRwf-1), this protein is Elongation factor Tu 1.